The sequence spans 135 residues: Large ribosomal subunit protein uL16c (135 aa).

The segment covering 1 to 23 has biased composition (basic residues); it reads MLSPKKTKFRKEHRGRMKGRSSR. The disordered stretch occupies residues 1 to 24; that stretch reads MLSPKKTKFRKEHRGRMKGRSSRG.

Belongs to the universal ribosomal protein uL16 family. As to quaternary structure, part of the 50S ribosomal subunit.

It localises to the plastid. It is found in the chloroplast. In Pelargonium hortorum (Common geranium), this protein is Large ribosomal subunit protein uL16c.